Reading from the N-terminus, the 462-residue chain is Glycerol-3-phosphate acyltransferase ATS12, chloroplastic (462 aa).

The N-terminal 82 residues, 1–82 (MFILSSSSST…DKESAQSAAT (82 aa)), are a transit peptide targeting the chloroplast. Positions 233–238 (HQTEAD) match the HXXXXD motif motif.

The protein belongs to the GPAT/DAPAT family.

It is found in the plastid. Its subcellular location is the chloroplast stroma. The enzyme catalyses a fatty acyl-[ACP] + sn-glycerol 3-phosphate = a 1-acyl-sn-glycero-3-phosphate + holo-[ACP]. It carries out the reaction sn-glycerol 3-phosphate + an acyl-CoA = a 1-acyl-sn-glycero-3-phosphate + CoA. It participates in phospholipid metabolism; CDP-diacylglycerol biosynthesis; CDP-diacylglycerol from sn-glycerol 3-phosphate: step 1/3. Functionally, esterifies the acyl-group from acyl-acyl carrier proteins (acyl-ACPs) to the sn-1 position of glycerol-3-phosphate. The physiological acyl donors in chloroplasts are acyl-ACPs, but acyl-CoAs are used as artificial donor for in vitro reactions. The enzyme from chilling-resistant plants discriminates against non-fluid palmitic acid and selects oleic acid whereas the enzyme from sensitive plants accepts both fatty acids. Squash is chilling-sensitive. Does not seem to discriminate between the acyl-ACP thioesters 18:1-ACP, 18:0-ACP and 16:0-ACP. Exhibits higher selectivity for 16:0-CoA than 18:1-CoA in vitro. This Cucurbita moschata (Winter crookneck squash) protein is Glycerol-3-phosphate acyltransferase ATS12, chloroplastic.